The chain runs to 292 residues: UPF0725 protein At4g28920 (292 aa).

A compositionally biased stretch (acidic residues) spans 1 to 17 (MSENDSSESDIEMDPEE). The interval 1–24 (MSENDSSESDIEMDPEEEKVYRRQ) is disordered.

This sequence belongs to the UPF0725 (EMB2204) family.

The chain is UPF0725 protein At4g28920 from Arabidopsis thaliana (Mouse-ear cress).